A 282-amino-acid chain; its full sequence is F-box protein VBF (282 aa).

One can recognise an F-box domain in the interval 1–44; that stretch reads MMMLPEACIANILAFTSPADAFSSSEVSSVFRLAGDSDFVWEKF.

In terms of assembly, component of SCF(VBF) E3 ubiquitin ligase complex that interacts with VIP1. Interacts directly with SKP1A and VIP1. Forms a complex composed of VIP1, VBF and Agrobacterium virE2.

Its function is as follows. Component of SCF(VBF) E3 ubiquitin ligase complexes, which mediate the ubiquitination and subsequent proteasomal degradation of target proteins such as VIP1 and Agrobacterium virE2, after their implication in T-DNA translocation to the host nucleus (can functionally replace Agrobacterium VirF). Required during Agrobacterium-induced tumor formation. This chain is F-box protein VBF (VBF), found in Arabidopsis thaliana (Mouse-ear cress).